A 565-amino-acid polypeptide reads, in one-letter code: Ubiquitin carboxyl-terminal hydrolase 39 (565 aa).

2 stretches are compositionally biased toward basic and acidic residues: residues M1–S21 and V28–E39. Disordered stretches follow at residues M1–E61 and E75–V95. Residue S46 is modified to Phosphoserine. K51 participates in a covalent cross-link: Glycyl lysine isopeptide (Lys-Gly) (interchain with G-Cter in SUMO2). At S82 the chain carries Phosphoserine. The span at E85 to V95 shows a compositional bias: basic and acidic residues. A UBP-type; degenerate zinc finger spans residues R103–Q200. Zn(2+) is bound by residues C136, C139, H155, and H161. The region spanning V225–R555 is the USP domain.

The protein belongs to the peptidase C19 family. In terms of assembly, the U4/U6-U5 tri-snRNP complex is a building block of the precatalytic spliceosome (spliceosome B complex). Component of the U4/U6-U5 tri-snRNP complex composed of the U4, U6 and U5 snRNAs and at least PRPF3, PRPF4, PRPF6, PRPF8, PRPF31, SNRNP200, TXNL4A, SNRNP40, SNRPB, SNRPD1, SNRPD2, SNRPD3, SNRPE, SNRPF, SNRPG, DDX23, CD2BP2, PPIH, SNU13, EFTUD2, SART1 and USP39, plus LSM2, LSM3, LSM4, LSM5, LSM6, LSM7 and LSM8.

Its subcellular location is the nucleus. It catalyses the reaction Thiol-dependent hydrolysis of ester, thioester, amide, peptide and isopeptide bonds formed by the C-terminal Gly of ubiquitin (a 76-residue protein attached to proteins as an intracellular targeting signal).. Deubiquitinating enzyme that plays a role in many cellular processes including cellular antiviral response, epithelial morphogenesis, DNA repair or B-cell development. Plays a role in pre-mRNA splicing as a component of the U4/U6-U5 tri-snRNP, one of the building blocks of the precatalytic spliceosome. Specifically regulates immunoglobulin gene rearrangement in a spliceosome-dependent manner, which involves modulating chromatin interactions at the Igh locus and therefore plays an essential role in B-cell development. Regulates AURKB mRNA levels, and thereby plays a role in cytokinesis and in the spindle checkpoint. Regulates apoptosis and G2/M cell cycle checkpoint in response to DNA damage by deubiquitinating and stabilizing CHK2. Also plays an important role in DNA repair by controlling the recruitment of XRCC4/LIG4 to DNA double-strand breaks for non-homologous end-joining repair. Participates in antiviral activity by affecting the type I IFN signaling by stabilizing STAT1 and decreasing its 'Lys-6'-linked ubiquitination. Contributes to non-canonical Wnt signaling during epidermal differentiation. Acts as a negative regulator NF-kappa-B activation through deubiquitination of 'Lys-48'-linked ubiquitination of NFKBIA. This chain is Ubiquitin carboxyl-terminal hydrolase 39, found in Homo sapiens (Human).